The primary structure comprises 86 residues: U18-theraphotoxin-Cg1a (86 aa).

Residues 1–20 (KASVLITLAVLGVMFVWTSA) form the signal peptide. Residues 21-49 (AELEERGSDQRDSPALIKSMAKVFQSEER) constitute a propeptide that is removed on maturation. Cystine bridges form between cysteine 51-cysteine 65, cysteine 58-cysteine 70, and cysteine 64-cysteine 78. A Phenylalanine amide modification is found at phenylalanine 84.

The protein belongs to the neurotoxin 10 (Hwtx-1) family. 47 subfamily. In terms of tissue distribution, expressed by the venom gland.

Its subcellular location is the secreted. Its function is as follows. Inhibits TTX-sensitive and TTX-insensitive sodium currents (IC(50) is 0.6 uM and 0.95 uM respectively) on rat dorsal root ganglion (DRG) neurons. Inhibits muscular subtypes sodium channels Nav1.4/SCN4A and Nav1.5/SCN5A transiently transfected in to HEK293 cells (IC(50) is 5.42 uM and 0.45 uM respectively). Also blocks Kv2.1/KCNB1 potassium channels expressed in X.laevis oocytes with an IC(50) of 604 nM. Injection of the toxin in mice was immediately followed by general ataxia, lack of response to stimuli and semiparalysis. This chain is U18-theraphotoxin-Cg1a, found in Chilobrachys guangxiensis (Chinese earth tiger tarantula).